We begin with the raw amino-acid sequence, 382 residues long: 3-isopropylmalate dehydrogenase (382 aa).

91-102 (GPKWGTGSVRPE) contributes to the NAD(+) binding site. Substrate-binding residues include arginine 109, arginine 119, arginine 148, and aspartate 240. Mg(2+)-binding residues include aspartate 240, aspartate 265, and aspartate 269. 304-315 (GSAPDLTENKVN) contributes to the NAD(+) binding site.

Belongs to the isocitrate and isopropylmalate dehydrogenases family. As to quaternary structure, homodimer. Mg(2+) serves as cofactor. Mn(2+) is required as a cofactor.

The protein resides in the cytoplasm. It catalyses the reaction (2R,3S)-3-isopropylmalate + NAD(+) = 4-methyl-2-oxopentanoate + CO2 + NADH. The protein operates within amino-acid biosynthesis; L-leucine biosynthesis; L-leucine from 3-methyl-2-oxobutanoate: step 3/4. Functionally, catalyzes the oxidation of 3-carboxy-2-hydroxy-4-methylpentanoate (3-isopropylmalate) to 3-carboxy-4-methyl-2-oxopentanoate. The product decarboxylates to 4-methyl-2 oxopentanoate. The chain is 3-isopropylmalate dehydrogenase (LEU2) from Debaryomyces hansenii (strain ATCC 36239 / CBS 767 / BCRC 21394 / JCM 1990 / NBRC 0083 / IGC 2968) (Yeast).